A 227-amino-acid polypeptide reads, in one-letter code: ATP synthase F(0) complex subunit a (227 aa).

A run of 6 helical transmembrane segments spans residues 14 to 34 (LLGI…FPTP), 69 to 89 (WATI…LGLL), 99 to 119 (LSLN…IGML), 137 to 157 (LLIP…PLAL), 180 to 200 (FVLI…LFLL), and 202 to 222 (ILEV…LSLY).

Belongs to the ATPase A chain family. In terms of assembly, component of the ATP synthase complex composed at least of ATP5F1A/subunit alpha, ATP5F1B/subunit beta, ATP5MC1/subunit c (homooctomer), MT-ATP6/subunit a, MT-ATP8/subunit 8, ATP5ME/subunit e, ATP5MF/subunit f, ATP5MG/subunit g, ATP5MK/subunit k, ATP5MJ/subunit j, ATP5F1C/subunit gamma, ATP5F1D/subunit delta, ATP5F1E/subunit epsilon, ATP5PF/subunit F6, ATP5PB/subunit b, ATP5PD/subunit d, ATP5PO/subunit OSCP. ATP synthase complex consists of a soluble F(1) head domain (subunits alpha(3) and beta(3)) - the catalytic core - and a membrane F(0) domain - the membrane proton channel (subunits c, a, 8, e, f, g, k and j). These two domains are linked by a central stalk (subunits gamma, delta, and epsilon) rotating inside the F1 region and a stationary peripheral stalk (subunits F6, b, d, and OSCP). Interacts with DNAJC30; interaction is direct.

It is found in the mitochondrion inner membrane. It carries out the reaction H(+)(in) = H(+)(out). Its function is as follows. Subunit a, of the mitochondrial membrane ATP synthase complex (F(1)F(0) ATP synthase or Complex V) that produces ATP from ADP in the presence of a proton gradient across the membrane which is generated by electron transport complexes of the respiratory chain. ATP synthase complex consist of a soluble F(1) head domain - the catalytic core - and a membrane F(1) domain - the membrane proton channel. These two domains are linked by a central stalk rotating inside the F(1) region and a stationary peripheral stalk. During catalysis, ATP synthesis in the catalytic domain of F(1) is coupled via a rotary mechanism of the central stalk subunits to proton translocation. With the subunit c (ATP5MC1), forms the proton-conducting channel in the F(0) domain, that contains two crucial half-channels (inlet and outlet) that facilitate proton movement from the mitochondrial intermembrane space (IMS) into the matrix. Protons are taken up via the inlet half-channel and released through the outlet half-channel, following a Grotthuss mechanism. The sequence is that of ATP synthase F(0) complex subunit a from Squalus acanthias (Spiny dogfish).